The chain runs to 37 residues: VFINVKCTGSKQCLPACKAAVGKAAGKCMNGKCKCYT.

3 cysteine pairs are disulfide-bonded: Cys-7/Cys-28, Cys-13/Cys-33, and Cys-17/Cys-35. The interval 26 to 33 is interaction with Ca(2+)-activated K(+) channels; the sequence is GKCMNGKC.

As to expression, expressed by the venom gland.

The protein resides in the secreted. Functionally, blocks reversibly Shaker B potassium-channels. This Tityus discrepans (Venezuelan scorpion) protein is Potassium channel toxin alpha-KTx 4.3.